The following is a 238-amino-acid chain: Ribosomal RNA small subunit methyltransferase G (238 aa).

Residues glycine 77, phenylalanine 82, 128–129 (AE), and arginine 147 each bind S-adenosyl-L-methionine.

The protein belongs to the methyltransferase superfamily. RNA methyltransferase RsmG family.

Its subcellular location is the cytoplasm. Functionally, specifically methylates the N7 position of guanine in position 535 of 16S rRNA. This chain is Ribosomal RNA small subunit methyltransferase G, found in Exiguobacterium sibiricum (strain DSM 17290 / CCUG 55495 / CIP 109462 / JCM 13490 / 255-15).